Here is a 1392-residue protein sequence, read N- to C-terminus: DNA-directed RNA polymerase subunit beta (1392 aa).

The protein belongs to the RNA polymerase beta chain family. As to quaternary structure, the RNAP catalytic core consists of 2 alpha, 1 beta, 1 beta' and 1 omega subunit. When a sigma factor is associated with the core the holoenzyme is formed, which can initiate transcription.

The catalysed reaction is RNA(n) + a ribonucleoside 5'-triphosphate = RNA(n+1) + diphosphate. Functionally, DNA-dependent RNA polymerase catalyzes the transcription of DNA into RNA using the four ribonucleoside triphosphates as substrates. The protein is DNA-directed RNA polymerase subunit beta of Neisseria meningitidis serogroup A / serotype 4A (strain DSM 15465 / Z2491).